The sequence spans 536 residues: uncharacterized protein (536 aa).

Residues Leu-163 to Glu-394 form the Radical SAM core domain. [4Fe-4S] cluster-binding residues include Cys-177, Cys-181, and Cys-184.

It depends on [4Fe-4S] cluster as a cofactor.

This is an uncharacterized protein from Synechocystis sp. (strain ATCC 27184 / PCC 6803 / Kazusa).